Consider the following 356-residue polypeptide: Dual-specificity RNA methyltransferase RlmN (356 aa).

E89 serves as the catalytic Proton acceptor. The Radical SAM core domain maps to S108–D341. Cysteines 115 and 346 form a disulfide. [4Fe-4S] cluster-binding residues include C122, C126, and C129. S-adenosyl-L-methionine is bound by residues G172–E173, S204, S227–H229, and N303. Catalysis depends on C346, which acts as the S-methylcysteine intermediate.

Belongs to the radical SAM superfamily. RlmN family. Requires [4Fe-4S] cluster as cofactor.

The protein localises to the cytoplasm. It carries out the reaction adenosine(2503) in 23S rRNA + 2 reduced [2Fe-2S]-[ferredoxin] + 2 S-adenosyl-L-methionine = 2-methyladenosine(2503) in 23S rRNA + 5'-deoxyadenosine + L-methionine + 2 oxidized [2Fe-2S]-[ferredoxin] + S-adenosyl-L-homocysteine. The enzyme catalyses adenosine(37) in tRNA + 2 reduced [2Fe-2S]-[ferredoxin] + 2 S-adenosyl-L-methionine = 2-methyladenosine(37) in tRNA + 5'-deoxyadenosine + L-methionine + 2 oxidized [2Fe-2S]-[ferredoxin] + S-adenosyl-L-homocysteine. In terms of biological role, specifically methylates position 2 of adenine 2503 in 23S rRNA and position 2 of adenine 37 in tRNAs. m2A2503 modification seems to play a crucial role in the proofreading step occurring at the peptidyl transferase center and thus would serve to optimize ribosomal fidelity. This Campylobacter jejuni (strain RM1221) protein is Dual-specificity RNA methyltransferase RlmN.